The following is a 337-amino-acid chain: Ornithine carbamoyltransferase, catabolic (337 aa).

Residues 57 to 60, glutamine 84, arginine 108, and 135 to 138 contribute to the carbamoyl phosphate site; these read STRT and HPTQ. Residues asparagine 167, aspartate 231, and 235 to 236 contribute to the L-ornithine site; that span reads SM. Residues 272–273 and arginine 317 each bind carbamoyl phosphate; that span reads CL.

Belongs to the aspartate/ornithine carbamoyltransferase superfamily. OTCase family.

The protein localises to the cytoplasm. It catalyses the reaction carbamoyl phosphate + L-ornithine = L-citrulline + phosphate + H(+). It functions in the pathway amino-acid degradation; L-arginine degradation via ADI pathway; carbamoyl phosphate from L-arginine: step 2/2. Reversibly catalyzes the transfer of the carbamoyl group from carbamoyl phosphate (CP) to the N(epsilon) atom of ornithine (ORN) to produce L-citrulline. This chain is Ornithine carbamoyltransferase, catabolic, found in Streptococcus ratti.